Consider the following 202-residue polypeptide: Protein GrpE (202 aa).

The segment covering 21-37 (EELKNEEVKEETHEHEH) has biased composition (basic and acidic residues). The interval 21–52 (EELKNEEVKEETHEHEHKHGGHTCCGKHGHKH) is disordered. A compositionally biased stretch (basic residues) spans 38–51 (KHGGHTCCGKHGHK).

This sequence belongs to the GrpE family. Homodimer.

The protein resides in the cytoplasm. Participates actively in the response to hyperosmotic and heat shock by preventing the aggregation of stress-denatured proteins, in association with DnaK and GrpE. It is the nucleotide exchange factor for DnaK and may function as a thermosensor. Unfolded proteins bind initially to DnaJ; upon interaction with the DnaJ-bound protein, DnaK hydrolyzes its bound ATP, resulting in the formation of a stable complex. GrpE releases ADP from DnaK; ATP binding to DnaK triggers the release of the substrate protein, thus completing the reaction cycle. Several rounds of ATP-dependent interactions between DnaJ, DnaK and GrpE are required for fully efficient folding. The polypeptide is Protein GrpE (Fusobacterium nucleatum subsp. polymorphum (Fusobacterium polymorphum)).